The chain runs to 330 residues: Ferric enterobactin transport system permease protein FepG (330 aa).

Residues 1 to 7 lie on the Periplasmic side of the membrane; sequence MIYVSRR. The helical transmembrane segment at 8-28 threads the bilayer; it reads LLITCLLLVSACVVAGIWGLR. Residues 29–62 lie on the Cytoplasmic side of the membrane; that stretch reads SGAVTLETSQVFAALMGDAPRSMTMVVTEWRLPR. Residues 63–83 form a helical membrane-spanning segment; the sequence is VLMALLIGAALGVSGAIFQSL. Topologically, residues 84–92 are periplasmic; the sequence is MRNPLGSPD. The helical transmembrane segment at 93-113 threads the bilayer; sequence VMGFNTGAWSGVLVAMVLFGQ. Over 114 to 117 the chain is Cytoplasmic; that stretch reads DLTA. The chain crosses the membrane as a helical span at residues 118–138; that stretch reads IALSAMVGGIVTSLLVWLLAW. Residues 139–146 are Periplasmic-facing; the sequence is RNGIDTFR. A helical transmembrane segment spans residues 147–167; that stretch reads LIIIGIGVRAMLVAFNTWLLL. Topologically, residues 168–190 are cytoplasmic; the sequence is KASLETALTAGLWNAGSLNGLTW. A helical membrane pass occupies residues 191-211; sequence AKTSPSAPIIILMLIAAALLV. The Periplasmic portion of the chain corresponds to 212–235; the sequence is RRMRLLEMGDDTACALGVSVERSR. A helical transmembrane segment spans residues 236-256; that stretch reads LLMMLVAVVLTAAATALAGPI. The Cytoplasmic portion of the chain corresponds to 257-275; that stretch reads SFIALVAPHIARRISGTAR. A helical membrane pass occupies residues 276 to 296; that stretch reads WGLTQAALCGALLLLAADLCA. Residues 297 to 303 are Periplasmic-facing; that stretch reads QQLFMPY. A helical transmembrane segment spans residues 304–324; sequence QLPVGVVTVSLGGIYLIVLLI. Residues 325-330 lie on the Cytoplasmic side of the membrane; the sequence is QESRKK.

It belongs to the binding-protein-dependent transport system permease family. FecCD subfamily. The complex is composed of two ATP-binding proteins (FepC), two transmembrane proteins (FepD and FepG) and a solute-binding protein (FepB).

It is found in the cell inner membrane. In terms of biological role, part of the ABC transporter complex FepBDGC involved in ferric enterobactin uptake. Responsible for the translocation of the substrate across the membrane. This chain is Ferric enterobactin transport system permease protein FepG (fepG), found in Escherichia coli (strain K12).